Consider the following 673-residue polypeptide: RAS guanyl-releasing protein 4 (673 aa).

Composition is skewed to basic residues over residues 1 to 10 (MNRKDIKRKS) and 20 to 32 (GRGRSRQARRHKT). Disordered regions lie at residues 1 to 34 (MNRKDIKRKSHQECSGKAGGRGRSRQARRHKTCP) and 164 to 188 (LGDASSLLSPGGPGPPPPMSSPGLG). The region spanning 49-175 (GVLSESSCSE…DASSLLSPGG (127 aa)) is the N-terminal Ras-GEF domain. Residues 164–173 (LGDASSLLSP) show a composition bias toward low complexity. A Ras-GEF domain is found at 201–432 (ETEELAQHLT…YELSYAREPR (232 aa)). The EF-hand domain maps to 466-501 (HVEQLVESVFKNYDPEGRGSISLEDFERLSGNFPFA). The Phorbol-ester/DAG-type zinc-finger motif lies at 540–590 (LHAFQEVTFRKPTFCHSCSGFLWGVTKQGYRCRDCGLCCHRHCRDQVRVEC). The interval 592–633 (KRPETKGDPGPPGAPVPATSLPPANCGSEESLSYTLSPDPES) is disordered.

It belongs to the RASGRP family. In terms of tissue distribution, expressed by mast cells and their progenitors (at protein level). Expressed by dendritic cells. As to expression, expressed in neutrophils.

The protein localises to the cytoplasm. It localises to the cell membrane. Its function is as follows. Functions as a cation- and diacylglycerol (DAG)-regulated nucleotide exchange factor activating Ras through the exchange of bound GDP for GTP. In neutrophils, participates in a phospholipase C-activating N-formyl peptide-activated GPCR (G protein-coupled receptor) signaling pathway by promoting Ras-mediated activation of PIK3CG/PI3Kgamma to promote neutrophil functional responses. In CD117(+) dendritic cells and mast cells, participates in an lipopolysaccharide (LPS)-activated signaling pathway that stimulates the production of interferon-gamma and other pro-inflammatory cytokines by natural killer (NK) cells. May function in mast cell differentiation. Does not appear to be required for the development of B-cells, DC-cells, T-cells, or NK-cells. Binds diacylglycerol (DAG). In terms of biological role, unable to bind diacylglycerol (DAG). This Mus musculus (Mouse) protein is RAS guanyl-releasing protein 4 (Rasgrp4).